We begin with the raw amino-acid sequence, 1133 residues long: uncharacterized protein (1133 aa).

4 disordered regions span residues 33-83 (QFED…NSSS), 305-629 (PVSN…NSNS), 679-723 (GKLD…SVKR), and 736-817 (IESP…SEEV). Residues 39–83 (NNNNSNNNNNNNNSNNNNSNNNENINRKTGSTLLSSSTSQLNSSS) show a composition bias toward low complexity. A DNA-binding region (NDT80) is located at residues 40-308 (NNNSNNNNNN…GHPTCNPVSN (269 aa)). A compositionally biased stretch (polar residues) spans 305-316 (PVSNNPSTPGTP). Over residues 317–384 (ISNFDSSNNN…NNNSSGNSSS (68 aa)) the composition is skewed to low complexity. A compositionally biased stretch (polar residues) spans 401-417 (INSLSNHNSPHLTPIQY). The segment covering 418–452 (NNNNNNSNNNSNNNNNNNNNNNNSNNNNNNSNNNN) has biased composition (low complexity). Polar residues predominate over residues 453–470 (HQFQSNNRIFKGNLSNPF). Composition is skewed to low complexity over residues 473–615 (NYSQ…GNNS) and 686–714 (NNSN…NNNN). Positions 736–747 (IESPQSYISSPT) are enriched in polar residues. Over residues 757–771 (QPQPQPQPQPQPQPQ) the composition is skewed to pro residues. A compositionally biased stretch (low complexity) spans 772–808 (PQSQSQSQSQSQSQSQSQSQSQSQPIQQIVQQQLSSP). The Peptidase S74 domain maps to 909–1020 (SDKRVKENVK…KKVDNVCMEL (112 aa)). Residues 1055–1075 (IFIGIGVFTLFVIFGLVAVSI) traverse the membrane as a helical segment. Positions 1107–1133 (SGSNSCYDSSSNSAIDTTTSTGSGSIK) are disordered.

Its subcellular location is the membrane. This is an uncharacterized protein from Dictyostelium discoideum (Social amoeba).